Reading from the N-terminus, the 266-residue chain is Cell wall synthesis protein Wag31 (266 aa).

Residues 31-64 adopt a coiled-coil conformation; the sequence is FLDLVENELTQLIEENSDLRQRIEELDHELAAGG. Threonine 77 bears the Phosphothreonine mark. Residues 152–203 are a coiled coil; it reads TAEATVAEAQQRADAMLADAQTRSEVQSRQAQEKADALQAEAERKHSEIMGA. A disordered region spans residues 239–266; sequence ELGQRGSAAPVDSNADAGGFDQFNRGNN.

It belongs to the DivIVA family. In terms of assembly, forms homooligomers. In terms of processing, phosphorylated by PknA.

It is found in the cytoplasm. Its function is as follows. Important for maintaining cell shape and cell wall integrity by localizing peptidoglycan synthesis to the cell poles. This Mycobacterium leprae (strain TN) protein is Cell wall synthesis protein Wag31 (wag31).